We begin with the raw amino-acid sequence, 838 residues long: Axin-2 (838 aa).

Positions 1-75 (MSSAVLVTLL…EGRASPDSPL (75 aa)) are disordered. The Tankyrase-binding motif motif lies at 21–30 (APRPPVPGEE). Over residues 42–55 (KVQSTKPMPVSSNA) the composition is skewed to polar residues. Positions 56–69 (RRNEDGLGEPEGRA) are enriched in basic and acidic residues. One can recognise an RGS domain in the interval 81–200 (SLHSLLGDQD…LTSDIYLEYV (120 aa)). Disordered stretches follow at residues 300-333 (SELS…KKQL), 398-435 (IRED…EEDP), 450-483 (PGCQ…LLPT), 568-682 (GSRG…AMPP), and 712-744 (VASQ…DHKE). Over residues 303-318 (SSDALTDDSMSMTDSS) the composition is skewed to low complexity. Positions 327-413 (MGSKKQLQRE…KEGSEQALSS (87 aa)) are interaction with GSK3B. Residues 413 to 476 (SRDGAPVQHP…PDHHHHHHQQ (64 aa)) are interaction with beta-catenin. Residues 727–737 (AGPTSFSNPSL) show a composition bias toward polar residues. In terms of domain architecture, DIX spans 756–838 (ASELIVTYFF…RILGKVERID (83 aa)).

In terms of assembly, interacts with SMAD7 and RNF111. Interacts with ANKRD6. Interacts with glycogen synthase kinase-3 beta (GSK3B) and beta-catenin. The interaction between axin and beta-catenin occurs via the armadillo repeats contained in beta-catenin. Interacts with SIAH1. Interacts with SIAH2. In terms of processing, ADP-ribosylated by tankyrase TNKS and TNKS2. Poly-ADP-ribosylated protein is recognized by RNF146, followed by ubiquitination and subsequent activation of the Wnt signaling pathway. Post-translationally, ubiquitinated by RNF146 when poly-ADP-ribosylated, leading to its degradation and subsequent activation of the Wnt signaling pathway. Deubiquitinated by USP34, deubiquitinated downstream of beta-catenin stabilization step: deubiquitination is important Wnt signaling to positively regulate beta-catenin (CTNBB1)-mediated transcription. Probably phosphorylated by GSK3B and dephosphorylated by PP2A. In terms of tissue distribution, expressed in lung and thymus.

It localises to the cytoplasm. Inhibitor of the Wnt signaling pathway. Down-regulates beta-catenin. Probably facilitate the phosphorylation of beta-catenin and APC by GSK3B. In Rattus norvegicus (Rat), this protein is Axin-2 (Axin2).